We begin with the raw amino-acid sequence, 721 residues long: Leucine-rich repeat flightless-interacting protein 2 (721 aa).

The DVL3-binding stretch occupies residues 1–370 (MGTPASGRKR…YMQGLKELKE (370 aa)). Position 18 is a phosphoserine (Ser-18). A coiled-coil region spans residues 22–49 (EALSNIAREAEARLAAKRAARAEARDIR). Phosphoserine is present on residues Gly-96, Leu-101, Tyr-168, Ser-173, Ser-190, and Ser-202. Disordered stretches follow at residues 232-262 (SARS…ESVV) and 295-338 (KSDK…IDPD). Polar residues-rich tracts occupy residues 237-251 (PGFT…VSSD) and 305-338 (TRPS…IDPD). Phosphoserine occurs at positions 309, 312, 320, 324, and 328. Thr-331 carries the post-translational modification Phosphothreonine. 2 positions are modified to phosphoserine: Ser-332 and Ser-333. 2 coiled-coil regions span residues 349–524 (DLKD…GEKH) and 566–714 (LDVR…KANR).

The protein belongs to the LRRFIP family. Interacts (via N-terminus) with DVL3. Interacts with FLII. Weakly interacts with MYD88 in resting cells. Following LPS-stimulation, the interaction with MYD88 is rapidly enhanced; the complex gradually dissociates to basal levels after 6 hours of stimulation. Interaction with MYD88 is regulated by LPS-induced phosphorylation at Ser-202. In the presence of LPS, competes with FLII for MYD88-binding. Post-translationally, ser-190 and Ser-202 are phosphorylated in response to LPS stimulation. Ser-202 phosphorylation regulates the LPS-induced interaction with MYD88. In terms of tissue distribution, widely expressed, with highest levels in heart and skeletal muscle.

Its function is as follows. May function as activator of the canonical Wnt signaling pathway, in association with DVL3, upstream of CTNNB1/beta-catenin. Positively regulates Toll-like receptor (TLR) signaling in response to agonist probably by competing with the negative FLII regulator for MYD88-binding. This is Leucine-rich repeat flightless-interacting protein 2 (LRRFIP2) from Homo sapiens (Human).